A 248-amino-acid polypeptide reads, in one-letter code: FCS-Like Zinc finger 14 (248 aa).

Over residues 85–94 (VCRSEPNQPG) the composition is skewed to polar residues. The interval 85 to 108 (VCRSEPNQPGRSDPVQFMSHGGST) is disordered. The segment at 181–224 (GFLNSCYLCRKKLHGQDIFIYRGEKAFCSTECRSSHIANDERKE) adopts an FLZ-type zinc-finger fold.

The protein belongs to the FLZ family. In terms of assembly, interacts with KIN10 and KIN11 via its FLZ-type zinc finger domain. Interacts with KINB1, KINB2 and KINB3 via its N-terminal part.

It is found in the cytoplasm. Its subcellular location is the nucleus. Its function is as follows. May act as an adapter to facilitate the interaction of SnRK1 complex with effector proteins, conferring tissue- and stimulus-type specific differences in the SnRK1 regulation pathway. The polypeptide is FCS-Like Zinc finger 14 (Arabidopsis thaliana (Mouse-ear cress)).